The chain runs to 317 residues: MQIALAPMEGLVDDILRDALTKVGGIDWCVTEFIRVSERLMPAHYFYKYASEFHNGAKTDAGTPLRLQLLGSDPVCLAENAAFACELGAPVLDLNFGCPAKTVNRSRGGAILLKEPELLHTIVSQVRRAVPKDIPVTAKMRLGYENTDGALDCARALADGGAAQIVVHARTKVDGYKPPAHWEWIARIQEVVKVPVVANGEIWTVEDWRRCREICGARDIMIGRGLVARPDLARQIAAAQKGEEVVPMTWAELQPMLRTFWQACLVKMTLVQAPGRLKQWLVLLTKSYPEATLMFNTLRRETDCDRITVLLGCSTKS.

Residues 7 to 9 and glutamine 68 each bind FMN; that span reads PME. Catalysis depends on cysteine 98, which acts as the Proton donor. FMN is bound by residues lysine 139, 199–201, and 223–224; these read NGE and GR.

Belongs to the Dus family. DusC subfamily. FMN serves as cofactor.

It carries out the reaction 5,6-dihydrouridine(16) in tRNA + NADP(+) = uridine(16) in tRNA + NADPH + H(+). It catalyses the reaction 5,6-dihydrouridine(16) in tRNA + NAD(+) = uridine(16) in tRNA + NADH + H(+). Functionally, catalyzes the synthesis of 5,6-dihydrouridine (D), a modified base found in the D-loop of most tRNAs, via the reduction of the C5-C6 double bond in target uridines. Specifically modifies U16 in tRNAs. This chain is tRNA-dihydrouridine(16) synthase, found in Pseudomonas syringae pv. tomato (strain ATCC BAA-871 / DC3000).